Here is a 540-residue protein sequence, read N- to C-terminus: Chaperonin GroEL 1 (540 aa).

ATP is bound by residues 29 to 32 (TLGP), 86 to 90 (DGTTT), glycine 413, 477 to 479 (NAA), and aspartate 493.

The protein belongs to the chaperonin (HSP60) family. In terms of assembly, forms a cylinder of 14 subunits composed of two heptameric rings stacked back-to-back. Interacts with the co-chaperonin GroES.

The protein resides in the cytoplasm. The catalysed reaction is ATP + H2O + a folded polypeptide = ADP + phosphate + an unfolded polypeptide.. Functionally, together with its co-chaperonin GroES, plays an essential role in assisting protein folding. The GroEL-GroES system forms a nano-cage that allows encapsulation of the non-native substrate proteins and provides a physical environment optimized to promote and accelerate protein folding. The protein is Chaperonin GroEL 1 of Salinispora arenicola (strain CNS-205).